Reading from the N-terminus, the 356-residue chain is UDP-3-O-acylglucosamine N-acyltransferase (356 aa).

Histidine 242 serves as the catalytic Proton acceptor.

The protein belongs to the transferase hexapeptide repeat family. LpxD subfamily. In terms of assembly, homotrimer.

The catalysed reaction is a UDP-3-O-[(3R)-3-hydroxyacyl]-alpha-D-glucosamine + a (3R)-hydroxyacyl-[ACP] = a UDP-2-N,3-O-bis[(3R)-3-hydroxyacyl]-alpha-D-glucosamine + holo-[ACP] + H(+). It functions in the pathway bacterial outer membrane biogenesis; LPS lipid A biosynthesis. Functionally, catalyzes the N-acylation of UDP-3-O-acylglucosamine using 3-hydroxyacyl-ACP as the acyl donor. Is involved in the biosynthesis of lipid A, a phosphorylated glycolipid that anchors the lipopolysaccharide to the outer membrane of the cell. In Acinetobacter baumannii (strain ACICU), this protein is UDP-3-O-acylglucosamine N-acyltransferase.